We begin with the raw amino-acid sequence, 350 residues long: Protein RecA (350 aa).

68 to 75 (GPESSGKT) lines the ATP pocket.

This sequence belongs to the RecA family.

The protein localises to the cytoplasm. Its function is as follows. Can catalyze the hydrolysis of ATP in the presence of single-stranded DNA, the ATP-dependent uptake of single-stranded DNA by duplex DNA, and the ATP-dependent hybridization of homologous single-stranded DNAs. It interacts with LexA causing its activation and leading to its autocatalytic cleavage. This chain is Protein RecA, found in Mycolicibacterium gilvum (strain PYR-GCK) (Mycobacterium gilvum (strain PYR-GCK)).